A 179-amino-acid polypeptide reads, in one-letter code: Large ribosomal subunit protein uL5 (179 aa).

Belongs to the universal ribosomal protein uL5 family. In terms of assembly, part of the 50S ribosomal subunit; part of the 5S rRNA/L5/L18/L25 subcomplex. Contacts the 5S rRNA and the P site tRNA. Forms a bridge to the 30S subunit in the 70S ribosome.

In terms of biological role, this is one of the proteins that bind and probably mediate the attachment of the 5S RNA into the large ribosomal subunit, where it forms part of the central protuberance. In the 70S ribosome it contacts protein S13 of the 30S subunit (bridge B1b), connecting the 2 subunits; this bridge is implicated in subunit movement. Contacts the P site tRNA; the 5S rRNA and some of its associated proteins might help stabilize positioning of ribosome-bound tRNAs. The protein is Large ribosomal subunit protein uL5 of Pseudomonas paraeruginosa (strain DSM 24068 / PA7) (Pseudomonas aeruginosa (strain PA7)).